The following is an 840-amino-acid chain: Telomere length regulation protein TEL2 homolog (840 aa).

Position 1 is an N-acetylmethionine (Met-1). 3 positions are modified to hydroxyproline: Pro-374, Pro-419, and Pro-422. Positions 443-497 are disordered; it reads PEPAGDCSSVSRGPSPAPVDTESPVEMPEKAVESDVPPTQPQGSDSELDSDDEFI. The residue at position 457 (Ser-457) is a Phosphoserine. Position 486 is a phosphoserine; by CK2 (Ser-486). Ser-488, Ser-492, and Ser-837 each carry phosphoserine. Positions 488-497 are enriched in acidic residues; sequence SELDSDDEFI.

Belongs to the TEL2 family. Component of the TTT complex composed of TELO2, TTI1 and TTI2. Interacts with ATM, ATR, MTOR, PRKDC, RUVBL2, TTI1, TTI2, SMG1 and TRRAP. Component of the mTORC1 and mTORC2 complexes. Interacts (phosphorylated form) with PIH1D1. Interaction with PIH1D1 mediates interaction of TELO2 with the R2TP complex composed of RUVBL1, RUVBL2, PIH1D1, and RPAP3. Hydroxylation by PHD3 is required for a proper interaction with ATR, and activation of the ATR/CHK1/p53 pathway following DNA damage. In terms of processing, phosphorylated at Ser-486 by CK2 following growth factor deprivation, leading to its subsequent ubiquitination by the SCF(FBXO9) complex. Phosphorylation by CK2 only takes place when TELO2 is bound to mTORC1, not mTORC2; leading to selective ubiquitination of mTORC1-associated protein. Post-translationally, ubiquitinated by the SCF(FBXO9) complex following phosphorylation by CK2 in response to growth factor deprivation, leading to its degradation by the proteasome. Only mTORC1-associated protein is ubiquitinated and degraded, leading to selective inactivation of mTORC1 to restrain cell growth and protein translation, while mTORC2 is activated due to the relief of feedback inhibition by mTORC1.

It is found in the cytoplasm. The protein localises to the membrane. The protein resides in the nucleus. It localises to the chromosome. Its subcellular location is the telomere. Regulator of the DNA damage response (DDR). Part of the TTT complex that is required to stabilize protein levels of the phosphatidylinositol 3-kinase-related protein kinase (PIKK) family proteins. The TTT complex is involved in the cellular resistance to DNA damage stresses, like ionizing radiation (IR), ultraviolet (UV) and mitomycin C (MMC). Together with the TTT complex and HSP90 may participate in the proper folding of newly synthesized PIKKs. Promotes assembly, stabilizes and maintains the activity of mTORC1 and mTORC2 complexes, which regulate cell growth and survival in response to nutrient and hormonal signals. May be involved in telomere length regulation. This chain is Telomere length regulation protein TEL2 homolog (Telo2), found in Mus musculus (Mouse).